Reading from the N-terminus, the 701-residue chain is A-type ATP synthase subunit I (701 aa).

10 helical membrane-spanning segments follow: residues 340–360 (WEIS…GLMF), 363–379 (FGNA…FYRY), 388–408 (IPKL…TGLL), 435–455 (LYNL…LLPF), 468–488 (MIFS…LGVI), 498–518 (FLFL…FIFM), 555–575 (GIVW…AILV), 583–603 (WGSA…LLLL), 612–632 (VLVF…MAYL), and 649–669 (IIIL…VVFI).

It belongs to the V-ATPase 116 kDa subunit family. As to quaternary structure, has multiple subunits with at least A(3), B(3), C, D, E, F, H, I and proteolipid K(x).

It localises to the cell membrane. Functionally, component of the A-type ATP synthase that produces ATP from ADP in the presence of a proton gradient across the membrane. This chain is A-type ATP synthase subunit I, found in Saccharolobus solfataricus (strain ATCC 35092 / DSM 1617 / JCM 11322 / P2) (Sulfolobus solfataricus).